A 344-amino-acid polypeptide reads, in one-letter code: Late embryogenesis abundant protein 17 (344 aa).

2 disordered regions span residues 1–20 and 116–258; these read MASR…RRAA and KDYT…QGQG. A coiled-coil region spans residues 3–52; it reads SRQDRREARAEADARRAAEEIARARDERVMQAEVDARSAADEIARARADR. 3 stretches are compositionally biased toward basic and acidic residues: residues 116-163, 172-230, and 238-252; these read KDYT…KDAV, EATK…DATK, and DKAR…DATD.

It belongs to the LEA type 4 family. In terms of tissue distribution, expressed in embryos.

The protein localises to the nucleus. Its function is as follows. Involved in abiotic stress responses. May function as chaperone and contribute to prevent the formation of damaging protein aggregates. The chain is Late embryogenesis abundant protein 17 from Oryza sativa subsp. japonica (Rice).